The following is a 484-amino-acid chain: Monocarboxylate transporter 2 (484 aa).

Residues Met-1–Asp-16 lie on the Cytoplasmic side of the membrane. A helical transmembrane segment spans residues Gly-17 to Phe-37. Topologically, residues Pro-38–Ala-60 are extracellular. A helical transmembrane segment spans residues Trp-61–Val-81. The Cytoplasmic segment spans residues Asn-82–Arg-87. Residues Pro-88–Asn-108 form a helical membrane-spanning segment. The Extracellular segment spans residues Ser-109–Thr-116. The helical transmembrane segment at Ile-117–Gly-137 threads the bilayer. At Lys-138 to Arg-144 the chain is on the cytoplasmic side. A helical membrane pass occupies residues Pro-145–Phe-165. Residues Asn-166–Gly-174 lie on the Extracellular side of the membrane. A helical membrane pass occupies residues Trp-175 to Leu-195. Residues Met-196 to Gly-245 lie on the Cytoplasmic side of the membrane. The disordered stretch occupies residues Thr-201–Ser-224. Residues Phe-246–Phe-266 traverse the membrane as a helical segment. Over Leu-267–Ala-282 the chain is Extracellular. Residues Leu-283–Ala-303 traverse the membrane as a helical segment. The Cytoplasmic portion of the chain corresponds to Asn-304 to Arg-311. Residues Ile-312–Leu-332 traverse the membrane as a helical segment. Residues Ala-333–Pro-337 lie on the Extracellular side of the membrane. Residues Ala-338 to Phe-358 traverse the membrane as a helical segment. Residues Glu-359 to Ser-372 are Cytoplasmic-facing. The helical transmembrane segment at Ala-373 to Gly-393 threads the bilayer. The Extracellular portion of the chain corresponds to Lys-394–Met-405. The chain crosses the membrane as a helical span at residues Tyr-406–Ile-426. The Cytoplasmic segment spans residues Asn-427–Ile-484. Positions Arg-437–Ile-484 are disordered. Basic and acidic residues-rich tracts occupy residues Pro-449–Ser-465 and Pro-475–Ile-484.

This sequence belongs to the major facilitator superfamily. Monocarboxylate porter (TC 2.A.1.13) family. In terms of assembly, homodimer. Interacts with GRID2IP. Interacts with EMB; interaction mediates SLC16A7 targeting to the plasma membrane. Interacts with isoform 2 of BSG. As to expression, abundant on the surface of hepatocytes. Present on parietal cells of the oxyntic gland of the stomach, on the basolateral surface of epithelial cells in the collecting ducts of the kidney, on sperm tails throughout the epididymis. Expressed in mitochondria-rich skeletal muscle fibers and cardiac myocytes (at protein level).

Its subcellular location is the cell membrane. The protein localises to the basolateral cell membrane. It localises to the cytoplasm. The catalysed reaction is pyruvate(out) + H(+)(out) = pyruvate(in) + H(+)(in). It carries out the reaction 3-methyl-2-oxobutanoate(out) + H(+)(out) = 3-methyl-2-oxobutanoate(in) + H(+)(in). The enzyme catalyses (S)-lactate(in) + H(+)(in) = (S)-lactate(out) + H(+)(out). It catalyses the reaction acetoacetate(out) + H(+)(out) = acetoacetate(in) + H(+)(in). The catalysed reaction is (R)-3-hydroxybutanoate(out) + H(+)(out) = (R)-3-hydroxybutanoate(in) + H(+)(in). It carries out the reaction 4-methyl-2-oxopentanoate(out) + H(+)(out) = 4-methyl-2-oxopentanoate(in) + H(+)(in). The enzyme catalyses (S)-3-hydroxybutanoate(out) + H(+)(out) = (S)-3-hydroxybutanoate(in) + H(+)(in). Transport activity exhibits steep dependence on substrate concentration. Substrate concentration sensitivity of SLC16A7 arises from the strong inter-subunit cooperativity of the SLC16A7 dimer during transport. Inhibited by AR-C155858. Proton-coupled monocarboxylate symporter. Catalyzes the rapid transport across the plasma membrane of monocarboxylates such as L-lactate, pyruvate and ketone bodies, acetoacetate, beta-hydroxybutyrate and acetate. Dimerization is functionally required and both subunits work cooperatively in transporting substrate. The chain is Monocarboxylate transporter 2 (SLC16A7) from Mesocricetus auratus (Golden hamster).